A 101-amino-acid chain; its full sequence is Replication restart protein PriB (101 aa).

Residues 1 to 101 (MTTNNLVLSG…IHAENVELKT (101 aa)) form the SSB domain.

The protein belongs to the PriB family. Homodimer. Interacts with PriA and DnaT. Component of the replication restart primosome. Primosome assembly occurs via a 'hand-off' mechanism. PriA binds to replication forks, subsequently PriB then DnaT bind; DnaT then displaces ssDNA to generate the helicase loading substrate.

Involved in the restart of stalled replication forks, which reloads the replicative helicase on sites other than the origin of replication; the PriA-PriB pathway is the major replication restart pathway. During primosome assembly it facilitates complex formation between PriA and DnaT on DNA; stabilizes PriA on DNA. Stimulates the DNA unwinding activity of PriA helicase. This Shewanella baltica (strain OS223) protein is Replication restart protein PriB.